A 113-amino-acid chain; its full sequence is U11-theraphotoxin-Hhn1e (113 aa).

Residues 1-21 (MNTVRVTFLLVFVLAVSLGQA) form the signal peptide. A propeptide spanning residues 22-74 (DKDENRMEMLEKTEQGKSYLDFAENLLLQKLEELEARLLEEDSEESRNSRQKR) is cleaved from the precursor. The span at 60–69 (LEEDSEESRN) shows a compositional bias: basic and acidic residues. The tract at residues 60–87 (LEEDSEESRNSRQKRCIGEGVPRDENDP) is disordered. Intrachain disulfides connect C75/C90 and C89/C110.

The protein belongs to the neurotoxin 14 (magi-1) family. 01 (HNTX-16) subfamily. As to expression, expressed by the venom gland.

The protein resides in the secreted. Functionally, probable ion channel inhibitor. This Cyriopagopus hainanus (Chinese bird spider) protein is U11-theraphotoxin-Hhn1e.